The sequence spans 434 residues: Asparagine--tRNA ligase (434 aa).

It belongs to the class-II aminoacyl-tRNA synthetase family.

It localises to the cytoplasm. It catalyses the reaction tRNA(Asn) + L-asparagine + ATP = L-asparaginyl-tRNA(Asn) + AMP + diphosphate + H(+). This chain is Asparagine--tRNA ligase, found in Pyrococcus abyssi (strain GE5 / Orsay).